The chain runs to 310 residues: Methionyl-tRNA formyltransferase (310 aa).

Residue 111–114 participates in (6S)-5,6,7,8-tetrahydrofolate binding; it reads SILP.

It belongs to the Fmt family.

The catalysed reaction is L-methionyl-tRNA(fMet) + (6R)-10-formyltetrahydrofolate = N-formyl-L-methionyl-tRNA(fMet) + (6S)-5,6,7,8-tetrahydrofolate + H(+). Attaches a formyl group to the free amino group of methionyl-tRNA(fMet). The formyl group appears to play a dual role in the initiator identity of N-formylmethionyl-tRNA by promoting its recognition by IF2 and preventing the misappropriation of this tRNA by the elongation apparatus. This is Methionyl-tRNA formyltransferase from Finegoldia magna (strain ATCC 29328 / DSM 20472 / WAL 2508) (Peptostreptococcus magnus).